The chain runs to 170 residues: MELKDYIATIENYPKEGVVFRDISPLMADGNAYNYAATEIVQYARDKEIDMVVGPEARGFIIGCPVAFALGVGFAPVRKPGKLPREVIEATYEKEYGTDTLTMHSDSIKPGQRVLIVDDLLATGGTIAATIELVEKMGGIVVGCAFLIELDELKGREKIGDYDYKVLMHY.

It belongs to the purine/pyrimidine phosphoribosyltransferase family. Homodimer.

Its subcellular location is the cytoplasm. It carries out the reaction AMP + diphosphate = 5-phospho-alpha-D-ribose 1-diphosphate + adenine. Its pathway is purine metabolism; AMP biosynthesis via salvage pathway; AMP from adenine: step 1/1. Catalyzes a salvage reaction resulting in the formation of AMP, that is energically less costly than de novo synthesis. This Lactococcus lactis subsp. lactis (strain IL1403) (Streptococcus lactis) protein is Adenine phosphoribosyltransferase.